The sequence spans 336 residues: Serpentine receptor class gamma-9 (336 aa).

The next 7 helical transmembrane spans lie at 30 to 50 (LLQAAYMVPPAFLYARILYVI), 64 to 84 (FVIYSMDSIVGFILLLLDIFI), 111 to 131 (IYYPLLNYLHCAQPLIQIFLT), 152 to 172 (LSFIVAFVSLSPFLIIWNTII), 200 to 220 (FLFLVRSVAVIITVASTVIMF), 237 to 257 (LCLACVIHSICFMVPSFFEAL), and 271 to 291 (FLIQPFAWDVLNVGSPLIMIF).

This sequence belongs to the nematode receptor-like protein srg family.

The protein localises to the membrane. In Caenorhabditis elegans, this protein is Serpentine receptor class gamma-9 (srg-9).